A 469-amino-acid chain; its full sequence is Calcium/calmodulin-dependent protein kinase type IV (469 aa).

Phosphoserine; by autocatalysis is present on residues serine 11 and serine 12. Residues 42 to 296 (FEVESELGRG…TFQALQHPWV (255 aa)) enclose the Protein kinase domain. Residues 48–56 (LGRGATSIV) and lysine 71 each bind ATP. The O-linked (GlcNAc) threonine glycan is linked to threonine 53. Serine 54 carries O-linked (GlcNAc) serine glycosylation. Serine 133 carries O-linked (GlcNAc) serine glycosylation. The Proton acceptor role is filled by aspartate 160. A glycan (O-linked (GlcNAc) serine) is linked at serine 185. Residue threonine 196 is modified to Phosphothreonine. Residues 297 to 336 (TGKAANFVHMDTAQKKLQEFNARRKLKAAVKAVVASSRLG) are autoinhibitory domain. A PP2A-binding region spans residues 302–319 (NFVHMDTAQKKLQEFNAR). Residues 318-337 (ARRKLKAAVKAVVASSRLGS) form a calmodulin-binding region. Serine 332 is subject to Phosphoserine; by autocatalysis. The segment at 336-469 (GSASSSHTSI…PQQDAIQPEY (134 aa)) is disordered. Serine 337 carries the post-translational modification Phosphoserine. O-linked (GlcNAc) serine glycosylation is found at serine 340, serine 341, and serine 352. The span at 360 to 374 (DAKDSTDLLGKKMQE) shows a compositional bias: basic and acidic residues. Residues 375–388 (EDQEEDQVEAEASA) are compositionally biased toward acidic residues. Residues 389 to 409 (DEMRKLQSEEVEKDAGVKEEE) show a composition bias toward basic and acidic residues. A compositionally biased stretch (acidic residues) spans 417-426 (DPEDELETDD). Basic and acidic residues predominate over residues 427–441 (PEMKRDSEEKLKSVE). Phosphoserine occurs at positions 433 and 439. A compositionally biased stretch (acidic residues) spans 442-453 (EEMDPMTEEEAP).

This sequence belongs to the protein kinase superfamily. CAMK Ser/Thr protein kinase family. CaMK subfamily. As to quaternary structure, monomer. Interacts with protein phosphatase 2A (PPP2CA/PPP2CB); the interaction is mutually exclusive with binding to Ca(2+)/calmodulin. Post-translationally, phosphorylated by CaMKK1 and CaMKK2 on Thr-196. Dephosphorylated by protein phosphatase 2A. Autophosphorylated on Ser-11 and Ser-12. Glycosylation at Ser-185 modulates the phosphorylation of CaMK4 at Thr-196 and negatively regulates its activity toward CREB1 in basal conditions and during early inomycin stimulation. As to expression, expressed in brain and testis.

Its subcellular location is the cytoplasm. The protein localises to the nucleus. It carries out the reaction L-seryl-[protein] + ATP = O-phospho-L-seryl-[protein] + ADP + H(+). The enzyme catalyses L-threonyl-[protein] + ATP = O-phospho-L-threonyl-[protein] + ADP + H(+). Its activity is regulated as follows. Activated by Ca(2+)/calmodulin. Binding of calmodulin results in conformational change that relieves intrasteric autoinhibition and allows phosphorylation of Thr-196 within the activation loop by CaMKK1 or CaMKK2. Phosphorylation of Thr-196 results in a 10-20-fold increase in total activity to generate Ca(2+)/calmodulin-independent activity. Autophosphorylation of the N-terminus Ser-11 and Ser-12 is required for full activation. Inactivated by protein phosphatase 2A (PPP2CA/PPP2CB) which dephosphorylates Thr-196, thereby terminating autonomous activity and helping to maintain the enzyme in its autoinhibited state. Functionally, calcium/calmodulin-dependent protein kinase that operates in the calcium-triggered CaMKK-CaMK4 signaling cascade and regulates, mainly by phosphorylation, the activity of several transcription activators, such as CREB1, MEF2D, JUN and RORA, which play pivotal roles in immune response, inflammation, and memory consolidation. In the thymus, regulates the CD4(+)/CD8(+) double positive thymocytes selection threshold during T-cell ontogeny. In CD4 memory T-cells, is required to link T-cell antigen receptor (TCR) signaling to the production of IL2, IFNG and IL4 (through the regulation of CREB and MEF2). Regulates the differentiation and survival phases of osteoclasts and dendritic cells (DCs). Mediates DCs survival by linking TLR4 and the regulation of temporal expression of BCL2. Phosphorylates the transcription activator CREB1 on 'Ser-133' in hippocampal neuron nuclei and contribute to memory consolidation and long term potentiation (LTP) in the hippocampus. Can activate the MAP kinases MAPK1/ERK2, MAPK8/JNK1 and MAPK14/p38 and stimulate transcription through the phosphorylation of ELK1 and ATF2. Can also phosphorylate in vitro CREBBP, PRM2, MEF2A and STMN1/OP18. May be involved in spermatogenesis. This is Calcium/calmodulin-dependent protein kinase type IV (Camk4) from Mus musculus (Mouse).